Reading from the N-terminus, the 158-residue chain is NAD(P)H-quinone oxidoreductase subunit J, chloroplastic (158 aa).

Belongs to the complex I 30 kDa subunit family. As to quaternary structure, NDH is composed of at least 16 different subunits, 5 of which are encoded in the nucleus.

It is found in the plastid. The protein localises to the chloroplast thylakoid membrane. The enzyme catalyses a plastoquinone + NADH + (n+1) H(+)(in) = a plastoquinol + NAD(+) + n H(+)(out). The catalysed reaction is a plastoquinone + NADPH + (n+1) H(+)(in) = a plastoquinol + NADP(+) + n H(+)(out). Functionally, NDH shuttles electrons from NAD(P)H:plastoquinone, via FMN and iron-sulfur (Fe-S) centers, to quinones in the photosynthetic chain and possibly in a chloroplast respiratory chain. The immediate electron acceptor for the enzyme in this species is believed to be plastoquinone. Couples the redox reaction to proton translocation, and thus conserves the redox energy in a proton gradient. In Solanum bulbocastanum (Wild potato), this protein is NAD(P)H-quinone oxidoreductase subunit J, chloroplastic.